Consider the following 152-residue polypeptide: Transcriptional regulator MraZ (152 aa).

SpoVT-AbrB domains lie at 5-52 and 81-124; these read INAI…TAAQ and ATDV…NKEL.

It belongs to the MraZ family. As to quaternary structure, forms oligomers.

It localises to the cytoplasm. The protein resides in the nucleoid. This chain is Transcriptional regulator MraZ, found in Legionella pneumophila (strain Paris).